A 168-amino-acid chain; its full sequence is Photosystem I assembly protein Ycf3 (168 aa).

3 TPR repeats span residues 35–68, 72–105, and 120–153; these read AFTY…EIDP, SYIL…NPFL, and GEQA…TPGN.

This sequence belongs to the Ycf3 family.

The protein localises to the plastid. It localises to the chloroplast thylakoid membrane. In terms of biological role, essential for the assembly of the photosystem I (PSI) complex. May act as a chaperone-like factor to guide the assembly of the PSI subunits. This Phaseolus vulgaris (Kidney bean) protein is Photosystem I assembly protein Ycf3.